A 391-amino-acid chain; its full sequence is GTPase Obg (391 aa).

The region spanning 1-159 is the Obg domain; the sequence is MKFLDQAKIF…IWVWLRLKLI (159 aa). The OBG-type G domain maps to 160–327; it reads ADAGLIGLPN…VLRVMATHVD (168 aa). GTP contacts are provided by residues 166-173, 191-195, 212-215, 279-282, and 308-310; these read GLPNAGKS, FTTLH, DIPG, SKID, and SAI. Mg(2+) contacts are provided by Ser173 and Thr193. A disordered region spans residues 352–391; the sequence is TGIDHGYNRPSAVVDWEDAPFDDDDDDDGDESGDKGQWTR. The segment covering 366 to 382 has biased composition (acidic residues); the sequence is DWEDAPFDDDDDDDGDE.

The protein belongs to the TRAFAC class OBG-HflX-like GTPase superfamily. OBG GTPase family. As to quaternary structure, monomer. Requires Mg(2+) as cofactor.

The protein resides in the cytoplasm. Functionally, an essential GTPase which binds GTP, GDP and possibly (p)ppGpp with moderate affinity, with high nucleotide exchange rates and a fairly low GTP hydrolysis rate. Plays a role in control of the cell cycle, stress response, ribosome biogenesis and in those bacteria that undergo differentiation, in morphogenesis control. This Rhodospirillum rubrum (strain ATCC 11170 / ATH 1.1.1 / DSM 467 / LMG 4362 / NCIMB 8255 / S1) protein is GTPase Obg.